Consider the following 277-residue polypeptide: Thymidylate synthase (277 aa).

Arginine 21 is a dUMP binding site. Histidine 51 contributes to the (6R)-5,10-methylene-5,6,7,8-tetrahydrofolate binding site. 126 to 127 lines the dUMP pocket; sequence RR. Cysteine 159 functions as the Nucleophile in the catalytic mechanism. DUMP-binding positions include 179-182, asparagine 190, and 220-222; these read RSAD and HLY. A (6R)-5,10-methylene-5,6,7,8-tetrahydrofolate-binding site is contributed by aspartate 182. (6R)-5,10-methylene-5,6,7,8-tetrahydrofolate is bound at residue alanine 276.

Belongs to the thymidylate synthase family. Bacterial-type ThyA subfamily. As to quaternary structure, homodimer.

The protein resides in the cytoplasm. The catalysed reaction is dUMP + (6R)-5,10-methylene-5,6,7,8-tetrahydrofolate = 7,8-dihydrofolate + dTMP. It functions in the pathway pyrimidine metabolism; dTTP biosynthesis. Its function is as follows. Catalyzes the reductive methylation of 2'-deoxyuridine-5'-monophosphate (dUMP) to 2'-deoxythymidine-5'-monophosphate (dTMP) while utilizing 5,10-methylenetetrahydrofolate (mTHF) as the methyl donor and reductant in the reaction, yielding dihydrofolate (DHF) as a by-product. This enzymatic reaction provides an intracellular de novo source of dTMP, an essential precursor for DNA biosynthesis. This is Thymidylate synthase from Thioalkalivibrio sulfidiphilus (strain HL-EbGR7).